Reading from the N-terminus, the 244-residue chain is LexA repressor (244 aa).

The segment at methionine 1 to aspartate 24 is disordered. The span at aspartate 10–aspartate 24 shows a compositional bias: low complexity. A DNA-binding region (H-T-H motif) is located at residues isoleucine 58–arginine 78. Catalysis depends on for autocatalytic cleavage activity residues serine 168 and lysine 205.

The protein belongs to the peptidase S24 family. Homodimer.

The catalysed reaction is Hydrolysis of Ala-|-Gly bond in repressor LexA.. Represses a number of genes involved in the response to DNA damage (SOS response), including recA and lexA. In the presence of single-stranded DNA, RecA interacts with LexA causing an autocatalytic cleavage which disrupts the DNA-binding part of LexA, leading to derepression of the SOS regulon and eventually DNA repair. In Mycobacterium ulcerans (strain Agy99), this protein is LexA repressor.